The sequence spans 172 residues: UPF0398 protein gbs0290 (172 aa).

It belongs to the UPF0398 family.

The sequence is that of UPF0398 protein gbs0290 from Streptococcus agalactiae serotype III (strain NEM316).